The chain runs to 1517 residues: DNA-directed RNA polymerase subunit beta' (1517 aa).

Positions 71, 73, 86, and 89 each coordinate Zn(2+). 3 residues coordinate Mg(2+): aspartate 482, aspartate 484, and aspartate 486. Positions 812, 886, 893, and 896 each coordinate Zn(2+).

It belongs to the RNA polymerase beta' chain family. As to quaternary structure, the RNAP catalytic core consists of 2 alpha, 1 beta, 1 beta' and 1 omega subunit. When a sigma factor is associated with the core the holoenzyme is formed, which can initiate transcription. It depends on Mg(2+) as a cofactor. Requires Zn(2+) as cofactor.

It carries out the reaction RNA(n) + a ribonucleoside 5'-triphosphate = RNA(n+1) + diphosphate. In terms of biological role, DNA-dependent RNA polymerase catalyzes the transcription of DNA into RNA using the four ribonucleoside triphosphates as substrates. This is DNA-directed RNA polymerase subunit beta' from Campylobacter jejuni subsp. jejuni serotype O:6 (strain 81116 / NCTC 11828).